The primary structure comprises 190 residues: Potassium-transporting ATPase KdpC subunit (190 aa).

A helical transmembrane segment spans residues 9 to 29; sequence VMFILFTIICGGIYPSVVTGI.

The protein belongs to the KdpC family. As to quaternary structure, the system is composed of three essential subunits: KdpA, KdpB and KdpC.

The protein resides in the cell inner membrane. Functionally, part of the high-affinity ATP-driven potassium transport (or Kdp) system, which catalyzes the hydrolysis of ATP coupled with the electrogenic transport of potassium into the cytoplasm. This subunit acts as a catalytic chaperone that increases the ATP-binding affinity of the ATP-hydrolyzing subunit KdpB by the formation of a transient KdpB/KdpC/ATP ternary complex. This Citrifermentans bemidjiense (strain ATCC BAA-1014 / DSM 16622 / JCM 12645 / Bem) (Geobacter bemidjiensis) protein is Potassium-transporting ATPase KdpC subunit.